The following is a 321-amino-acid chain: D-alanine--D-alanine ligase (321 aa).

Residues 121 to 315 (RSCFLKNNIN…FTNLIEEIIK (195 aa)) enclose the ATP-grasp domain. ATP is bound at residue 148–199 (MKRPYVIKPLKQGSSIGVEVIFEEDDFHFIDYDFPYGEDIIIEQYIQGQELQ). Mg(2+) is bound by residues E268, E282, and N284.

Belongs to the D-alanine--D-alanine ligase family. Mg(2+) is required as a cofactor. Requires Mn(2+) as cofactor.

It is found in the cytoplasm. It carries out the reaction 2 D-alanine + ATP = D-alanyl-D-alanine + ADP + phosphate + H(+). It participates in cell wall biogenesis; peptidoglycan biosynthesis. Functionally, cell wall formation. The chain is D-alanine--D-alanine ligase from Rickettsia typhi (strain ATCC VR-144 / Wilmington).